Consider the following 124-residue polypeptide: Fluoride-specific ion channel FluC (124 aa).

3 helical membrane-spanning segments follow: residues 5-27 (LFVA…FMLQ), 70-90 (VGLL…LLLI), and 95-115 (WIKA…MVYL). Residues glycine 74 and threonine 77 each contribute to the Na(+) site.

The protein belongs to the fluoride channel Fluc/FEX (TC 1.A.43) family.

Its subcellular location is the cell inner membrane. The catalysed reaction is fluoride(in) = fluoride(out). With respect to regulation, na(+) is not transported, but it plays an essential structural role and its presence is essential for fluoride channel function. Fluoride-specific ion channel. Important for reducing fluoride concentration in the cell, thus reducing its toxicity. In Shewanella sediminis (strain HAW-EB3), this protein is Fluoride-specific ion channel FluC.